An 89-amino-acid chain; its full sequence is Double-stranded DNA-binding protein (89 aa).

In terms of assembly, homodimer.

Its function is as follows. May play a role in transcription of several T4 genes. Binds double-stranded DNA and interacts preferentially with T4 late promoter regions. The protein is Double-stranded DNA-binding protein (dsbA) of Enterobacteria phage T4 (Bacteriophage T4).